Reading from the N-terminus, the 425-residue chain is tRNA(Ile)-lysidine synthase (425 aa).

27–32 (SGGLDS) contacts ATP.

This sequence belongs to the tRNA(Ile)-lysidine synthase family.

It localises to the cytoplasm. It catalyses the reaction cytidine(34) in tRNA(Ile2) + L-lysine + ATP = lysidine(34) in tRNA(Ile2) + AMP + diphosphate + H(+). Functionally, ligates lysine onto the cytidine present at position 34 of the AUA codon-specific tRNA(Ile) that contains the anticodon CAU, in an ATP-dependent manner. Cytidine is converted to lysidine, thus changing the amino acid specificity of the tRNA from methionine to isoleucine. The protein is tRNA(Ile)-lysidine synthase of Streptococcus pneumoniae (strain Taiwan19F-14).